Here is a 1323-residue protein sequence, read N- to C-terminus: Glutamate receptor ionotropic, NMDA 2D (1323 aa).

An N-terminal signal peptide occupies residues 1–27 (MRGAGGPRGPRGPAKMLLLLALACASP). The Extracellular segment spans residues 28–579 (FPEEVPGPGA…SPSAFLEPYS (552 aa)). A glycan (N-linked (GlcNAc...) asparagine) is linked at Asn89. A disulfide bridge links Cys101 with Cys345. N-linked (GlcNAc...) asparagine glycosylation is found at Asn349, Asn363, Asn381, and Asn464. Intrachain disulfides connect Cys452/Cys480 and Cys459/Cys481. Residues Ser536, Thr538, and Arg543 each contribute to the L-glutamate site. Residue Asn566 is glycosylated (N-linked (GlcNAc...) asparagine). The helical transmembrane segment at 580–601 (PAVWVMMFVMCLTVVAVTVFIF) threads the bilayer. Over 602-626 (EYLSPVGYNRSLATGKRPGGSTFTI) the chain is Cytoplasmic. Residues 627-638 (GKSIWLLWALVF) constitute an intramembrane region (discontinuously helical). Residues 628–647 (KSIWLLWALVFNNSVPVENP) form a pore-forming region. Residues 639–650 (NNSVPVENPRGT) lie on the Cytoplasmic side of the membrane. Residues 651 to 671 (TSKIMVLVWAFFAVIFLASYT) traverse the membrane as a helical segment. Residues 672–840 (ANLAAFMIQE…EVMSSKLDID (169 aa)) lie on the Extracellular side of the membrane. Asn712 is a glycosylation site (N-linked (GlcNAc...) asparagine). Ser714, Thr715, and Asp756 together coordinate L-glutamate. A disulfide bridge connects residues Cys770 and Cys825. A helical transmembrane segment spans residues 841–864 (NMAGVFYMLLVAMGLSLLVFAWEH). Residues 865–1323 (LVYWRLRHCL…AHFSSLESEV (459 aa)) lie on the Cytoplasmic side of the membrane. 3 disordered regions span residues 897–952 (EAAP…PGGA), 977–1112 (AAPR…SLGG), and 1201–1323 (PWAA…ESEV). The segment covering 899–929 (APPPAKPPPPPQPLPSPAYPAARPPPGPAPF) has biased composition (pro residues). Residues 931–940 (PRERAAADRW) show a composition bias toward basic and acidic residues. A compositionally biased stretch (low complexity) spans 977–986 (AAPRGAAGRP). The segment covering 987–1001 (LSPPTTQPPQKPPPS) has biased composition (pro residues). The segment covering 1030–1039 (AAAAAAVGPP) has biased composition (low complexity). Pro residues predominate over residues 1080–1092 (TAPPPRRAAPPPC). Over residues 1208-1228 (PRRRARCGCPRPHPHRPRASH) the composition is skewed to basic residues. Arg1303 bears the Omega-N-methylarginine mark. Ser1313 is subject to Phosphoserine. A PDZ-binding motif is present at residues 1321-1323 (SEV).

It belongs to the glutamate-gated ion channel (TC 1.A.10.1) family. NR2D/GRIN2D subfamily. In terms of assembly, heterotetramer. Forms heterotetrameric channels composed of two GluN1/zeta subunits (GRIN1), and two identical GluN2/epsilon subunits (GRIN2A, GRIN2B, GRIN2C or GRIN2D) or GluN3 subunits (GRIN3A or GRIN3B) (in vitro). In vivo, the subunit composition may depend on the expression levels of the different subunits. Interacts with PDZ domains of PATJ and DLG4. Expressed in brain, mainly in the subcortical region.

It localises to the cell membrane. The protein localises to the postsynaptic cell membrane. It carries out the reaction Ca(2+)(in) = Ca(2+)(out). It catalyses the reaction Na(+)(in) = Na(+)(out). The catalysed reaction is K(+)(in) = K(+)(out). Functionally, component of N-methyl-D-aspartate (NMDA) receptors (NMDARs) that function as heterotetrameric, ligand-gated cation channels with high calcium permeability and voltage-dependent block by Mg(2+). Participates in synaptic plasticity for learning and memory formation. Channel activation requires binding of the neurotransmitter L-glutamate to the GluN2 subunit, glycine or D-serine binding to the GluN1 subunit, plus membrane depolarization to eliminate channel inhibition by Mg(2+). NMDARs mediate simultaneously the potasium efflux and the influx of calcium and sodium. Each GluN2 subunit confers differential attributes to channel properties, including activation, deactivation and desensitization kinetics, pH sensitivity, Ca2(+) permeability, and binding to allosteric modulators. The protein is Glutamate receptor ionotropic, NMDA 2D of Rattus norvegicus (Rat).